Reading from the N-terminus, the 569-residue chain is Urease subunit alpha (569 aa).

Positions 131–569 (GAIDSHIHFI…LPLAQRYLLL (439 aa)) constitute a Urease domain. Ni(2+) is bound by residues His136, His138, and Lys219. Position 219 is an N6-carboxylysine (Lys219). Residue His221 participates in substrate binding. Residues His248 and His274 each contribute to the Ni(2+) site. His322 functions as the Proton donor in the catalytic mechanism. Residue Asp362 coordinates Ni(2+).

The protein belongs to the metallo-dependent hydrolases superfamily. Urease alpha subunit family. As to quaternary structure, heterotrimer of UreA (gamma), UreB (beta) and UreC (alpha) subunits. Three heterotrimers associate to form the active enzyme. Ni cation is required as a cofactor. Post-translationally, carboxylation allows a single lysine to coordinate two nickel ions.

It localises to the cytoplasm. It carries out the reaction urea + 2 H2O + H(+) = hydrogencarbonate + 2 NH4(+). It participates in nitrogen metabolism; urea degradation; CO(2) and NH(3) from urea (urease route): step 1/1. This chain is Urease subunit alpha, found in Prochlorococcus marinus (strain NATL1A).